A 138-amino-acid chain; its full sequence is Protein SPMIP3 (138 aa).

The protein is Protein SPMIP3 (SPMIP3) of Bos taurus (Bovine).